The primary structure comprises 626 residues: Elongation factor 4 (626 aa).

The tr-type G domain maps to 14–195; that stretch reads SVIRNFCIIA…QIVMDVPAPH (182 aa). GTP-binding positions include 26–31 and 142–145; these read DHGKST and NKID. The interval 603-626 is disordered; the sequence is LSTGEDSNDRDTKDKIRAAQKTEG. The span at 609-626 shows a compositional bias: basic and acidic residues; the sequence is SNDRDTKDKIRAAQKTEG.

The protein belongs to the TRAFAC class translation factor GTPase superfamily. Classic translation factor GTPase family. LepA subfamily.

It is found in the cell membrane. It carries out the reaction GTP + H2O = GDP + phosphate + H(+). In terms of biological role, required for accurate and efficient protein synthesis under certain stress conditions. May act as a fidelity factor of the translation reaction, by catalyzing a one-codon backward translocation of tRNAs on improperly translocated ribosomes. Back-translocation proceeds from a post-translocation (POST) complex to a pre-translocation (PRE) complex, thus giving elongation factor G a second chance to translocate the tRNAs correctly. Binds to ribosomes in a GTP-dependent manner. This Bifidobacterium longum subsp. infantis (strain ATCC 15697 / DSM 20088 / JCM 1222 / NCTC 11817 / S12) protein is Elongation factor 4.